We begin with the raw amino-acid sequence, 215 residues long: Probable nicotinate-nucleotide adenylyltransferase (215 aa).

It belongs to the NadD family.

It carries out the reaction nicotinate beta-D-ribonucleotide + ATP + H(+) = deamido-NAD(+) + diphosphate. It participates in cofactor biosynthesis; NAD(+) biosynthesis; deamido-NAD(+) from nicotinate D-ribonucleotide: step 1/1. In terms of biological role, catalyzes the reversible adenylation of nicotinate mononucleotide (NaMN) to nicotinic acid adenine dinucleotide (NaAD). In Shewanella sp. (strain W3-18-1), this protein is Probable nicotinate-nucleotide adenylyltransferase.